Here is a 303-residue protein sequence, read N- to C-terminus: Y-box-binding protein 1 (303 aa).

The span at 1 to 12 (MSSEVETQQQQP) shows a compositional bias: polar residues. The interval 1–28 (MSSEVETQQQQPDALEGKAGQEPAATVG) is disordered. The region spanning 39 to 103 (GTVKWFNVRN…GEKGAEAANV (65 aa)) is the CSD domain. Residues 43 to 48 (WFNVRN) form a C5-methylcytosine binding region. The interval 98-303 (AEAANVTGPE…TPEAEQGGAE (206 aa)) is disordered. Residues 122–132 (HYRRYPRRRGP) are compositionally biased toward basic residues. 2 stretches are compositionally biased toward low complexity: residues 133–143 (PRNYQQNYQNN) and 173–187 (PPYY…RPQY). Basic residues-rich tracts occupy residues 220–229 (FRPRFRRGPP) and 258–270 (RRYR…RRRR). Residues 271 to 284 (PENPKSQDGKETKA) are compositionally biased toward basic and acidic residues.

The protein belongs to the YBX1 family.

The protein resides in the cytoplasm. It localises to the nucleus. The protein localises to the cytoplasmic granule. It is found in the secreted. Its subcellular location is the extracellular exosome. The protein resides in the P-body. Functionally, DNA- and RNA-binding protein involved in various processes, such as translational repression, RNA stabilization, mRNA splicing and transcription regulation. Binds preferentially to the 5'-[CU]CUGCG-3' RNA motif and specifically recognizes mRNA transcripts modified by C5-methylcytosine (m5C). Promotes mRNA stabilization: acts by binding to m5C-containing mRNAs and preventing mRNA decay. Plays a role in the maternal-to-zygotic transition in early embryo by binding to m5C-containing maternal mRNAs and preventing their degradation. Also promotes maternal-to-zygotic transition in oocytes and embryos by promoting translation repression; molecular mechanisms governing translation repression are unknown. Plays a key role in RNA composition of extracellular exosomes by defining the sorting of small non-coding RNAs, such as tRNAs, Y RNAs, Vault RNAs and miRNAs. Probably sorts RNAs in exosomes by recognizing and binding C5-methylcytosine (m5C)-containing RNAs. Acts as a key effector of epidermal progenitors by preventing epidermal progenitor senescence: acts by regulating the translation of a senescence-associated subset of cytokine mRNAs, possibly by binding to m5C-containing mRNAs. Also involved in pre-mRNA alternative splicing regulation: binds to splice sites in pre-mRNA and regulates splice site selection. Also able to bind DNA and regulate transcription. Binds to promoters that contain a Y-box (5'-CTGATTGGCCAA-3'). Promotes separation of DNA strands that contain mismatches or are modified by cisplatin. Has endonucleolytic activity and can introduce nicks or breaks into double-stranded DNA, suggesting a role in DNA repair. The secreted form acts as an extracellular mitogen and stimulates cell migration and proliferation. The chain is Y-box-binding protein 1 from Xenopus laevis (African clawed frog).